The chain runs to 1109 residues: Zinc finger E-box-binding homeobox 1 (1109 aa).

Disordered stretches follow at residues 1-106 and 123-143; these read MADG…DPNV and PEEDQRQGTPEASGHDDNGTP. Residues 15-30 are compositionally biased toward low complexity; that stretch reads PRRNNVTNYNTVVEAN. Phosphoserine is present on residues Ser-31 and Ser-33. The span at 87 to 98 shows a compositional bias: acidic residues; sequence VKDDECDSDAEN. A C2H2-type 1 zinc finger spans residues 150–173; the sequence is LTCPYCDRGYKRFTSLKEHIKYRH. Glycyl lysine isopeptide (Lys-Gly) (interchain with G-Cter in SUMO2) cross-links involve residues Lys-166 and Lys-175. 2 consecutive C2H2-type zinc fingers follow at residues 180-202 and 220-242; these read FSCSLCSYTFAYRTQLERHMTSH and FKCTECGKAFKYKHHLKEHLRIH. Residues 248 to 272 form a C2H2-type 4; atypical zinc finger; sequence YECPNCKKRFSHSGSYSSHISSKKC. The tract at residues 278–307 is disordered; sequence VNGRPRSGLKTSQCSSPSLSTSPGSPTRPQ. Residue Lys-287 forms a Glycyl lysine isopeptide (Lys-Gly) (interchain with G-Cter in SUMO2) linkage. A compositionally biased stretch (low complexity) spans 288 to 304; the sequence is TSQCSSPSLSTSPGSPT. Phosphoserine occurs at positions 293 and 302. Glycyl lysine isopeptide (Lys-Gly) (interchain with G-Cter in SUMO2) cross-links involve residues Lys-311 and Lys-315. Lys-327 is covalently cross-linked (Glycyl lysine isopeptide (Lys-Gly) (interchain with G-Cter in SUMO); alternate). A Glycyl lysine isopeptide (Lys-Gly) (interchain with G-Cter in SUMO2); alternate cross-link involves residue Lys-327. Glycyl lysine isopeptide (Lys-Gly) (interchain with G-Cter in SUMO2) cross-links involve residues Lys-419, Lys-473, Lys-484, Lys-495, and Lys-528. Disordered regions lie at residues 468-501, 525-566, and 614-711; these read VPQNLKKENPAPPKSCKSEKSPEDLTVKSEKDKS, PELK…SQPP, and QIPG…PQVE. The span at 483–501 shows a compositional bias: basic and acidic residues; it reads CKSEKSPEDLTVKSEKDKS. The homeobox; atypical DNA-binding region spans 559-618; it reads DLSPSQPPLKNLLSLLKAYYALNAQPSTEELTKIADSVNLPLDVVKKWFEKMQAGQIPGQ. Residues 654-665 are compositionally biased toward polar residues; that stretch reads RGQSPLKMTSSP. Phosphoserine occurs at positions 657, 664, 671, and 678. Over residues 673-703 the composition is skewed to polar residues; that stretch reads INGSRSCTSSPSPLNLSSARNPQGYSCVSEG. A Phosphothreonine modification is found at Thr-680. At Ser-682 the chain carries Phosphoserine. Lys-752 is covalently cross-linked (Glycyl lysine isopeptide (Lys-Gly) (interchain with G-Cter in SUMO); alternate). Residue Lys-752 forms a Glycyl lysine isopeptide (Lys-Gly) (interchain with G-Cter in SUMO2); alternate linkage. A disordered region spans residues 834-873; it reads PPVKVIQPNGNQDERQDTSSEGVSVEDQNDSDCTPPKKKT. 2 C2H2-type zinc fingers span residues 881-903 and 909-931; these read YACDLCDKIFQKSSSLLRHKYEH and HECGICRKAFKHKHHLIEHMRLH. The C2H2-type 7; atypical zinc finger occupies 937–958; that stretch reads YQCDKCGKRFSHSGSYSQHMNH. Residues 968 to 1109 are disordered; the sequence is EDRDAMEQED…RLSEEKTNEA (142 aa). Positions 1012–1066 are enriched in acidic residues; that stretch reads EEDEDSEKEEEEEDKEMEELQEDKECENPQEEEEEEEEEEEEEEEEEEEEAEEAE. Low complexity predominate over residues 1071 to 1087; that stretch reads AAKTGGAVEEEAAQQAG. Residues 1097 to 1109 are compositionally biased toward basic and acidic residues; that stretch reads ESKRLSEEKTNEA.

It belongs to the delta-EF1/ZFH-1 C2H2-type zinc-finger family. Interacts (via N-terminus) with SMARCA4/BRG1. In terms of processing, ubiquitinated, leading to degradation in a proteasome-dependent manner. Deubiquitinated by USP51, leading to stabilization.

It is found in the nucleus. In terms of biological role, acts as a transcriptional repressor. Binds to E-box sequences in the immunoglobulin heavy chain enhancer as well as in the regulatory regions of many other tissue-specific genes. Represses E-cadherin promoter and induces an epithelial-mesenchymal transition (EMT) by recruiting SMARCA4/BRG1. Represses BCL6 transcription in the presence of the corepressor CTBP1. Positively regulates neuronal differentiation. Represses RCOR1 transcription activation during neurogenesis. Represses transcription by binding to the E box (5'-CANNTG-3'). In the absence of TGFB1, acts as a repressor of COL1A2 transcription via binding to the E-box in the upstream enhancer region. The protein is Zinc finger E-box-binding homeobox 1 of Rattus norvegicus (Rat).